A 152-amino-acid polypeptide reads, in one-letter code: Kininogen-1c (152 aa).

The signal sequence occupies residues 1-23 (MRLWFCLSLFIVLCLEHFPGTLA). Residues 28-44 (VPESEEKTEQFLRDLPK) show a composition bias toward basic and acidic residues. Positions 28–152 (VPESEEKTEQ…RGKFHSQSHV (125 aa)) are disordered.

The protein belongs to the bradykinin-related peptide family. As to expression, expressed by the skin glands.

It localises to the secreted. Its function is as follows. Potent vasodilator. Binds B1 (BDKRB1) and B2 (BDKRB2) bradykinin receptors. The polypeptide is Kininogen-1c (Bombina maxima (Giant fire-bellied toad)).